Consider the following 131-residue polypeptide: Aspartate 1-decarboxylase (131 aa).

The active-site Schiff-base intermediate with substrate; via pyruvic acid is the serine 25. Serine 25 carries the post-translational modification Pyruvic acid (Ser). Threonine 57 is a substrate binding site. Residue tyrosine 58 is the Proton donor of the active site. Substrate is bound at residue 73–75 (GAA).

The protein belongs to the PanD family. Heterooctamer of four alpha and four beta subunits. The cofactor is pyruvate. In terms of processing, is synthesized initially as an inactive proenzyme, which is activated by self-cleavage at a specific serine bond to produce a beta-subunit with a hydroxyl group at its C-terminus and an alpha-subunit with a pyruvoyl group at its N-terminus.

Its subcellular location is the cytoplasm. It carries out the reaction L-aspartate + H(+) = beta-alanine + CO2. It functions in the pathway cofactor biosynthesis; (R)-pantothenate biosynthesis; beta-alanine from L-aspartate: step 1/1. Its function is as follows. Catalyzes the pyruvoyl-dependent decarboxylation of aspartate to produce beta-alanine. This chain is Aspartate 1-decarboxylase, found in Anaeromyxobacter sp. (strain K).